A 219-amino-acid chain; its full sequence is Thiopurine S-methyltransferase (219 aa).

Tryptophan 10, leucine 45, glutamate 66, and arginine 123 together coordinate S-adenosyl-L-methionine.

It belongs to the class I-like SAM-binding methyltransferase superfamily. TPMT family.

It is found in the cytoplasm. The enzyme catalyses S-adenosyl-L-methionine + a thiopurine = S-adenosyl-L-homocysteine + a thiopurine S-methylether.. This Bordetella petrii (strain ATCC BAA-461 / DSM 12804 / CCUG 43448) protein is Thiopurine S-methyltransferase.